Reading from the N-terminus, the 349-residue chain is Phosphoribosylformylglycinamidine cyclo-ligase (349 aa).

The protein belongs to the AIR synthase family.

It localises to the cytoplasm. The enzyme catalyses 2-formamido-N(1)-(5-O-phospho-beta-D-ribosyl)acetamidine + ATP = 5-amino-1-(5-phospho-beta-D-ribosyl)imidazole + ADP + phosphate + H(+). Its pathway is purine metabolism; IMP biosynthesis via de novo pathway; 5-amino-1-(5-phospho-D-ribosyl)imidazole from N(2)-formyl-N(1)-(5-phospho-D-ribosyl)glycinamide: step 2/2. This Bordetella avium (strain 197N) protein is Phosphoribosylformylglycinamidine cyclo-ligase.